We begin with the raw amino-acid sequence, 231 residues long: Ribose-5-phosphate isomerase A (231 aa).

Substrate-binding positions include Thr-32 to Thr-35, Asp-85 to Asp-88, and Lys-98 to Gly-101. The Proton acceptor role is filled by Glu-107. A substrate-binding site is contributed by Lys-125.

Belongs to the ribose 5-phosphate isomerase family. In terms of assembly, homodimer.

The catalysed reaction is aldehydo-D-ribose 5-phosphate = D-ribulose 5-phosphate. It participates in carbohydrate degradation; pentose phosphate pathway; D-ribose 5-phosphate from D-ribulose 5-phosphate (non-oxidative stage): step 1/1. Functionally, catalyzes the reversible conversion of ribose-5-phosphate to ribulose 5-phosphate. This is Ribose-5-phosphate isomerase A from Burkholderia cenocepacia (strain ATCC BAA-245 / DSM 16553 / LMG 16656 / NCTC 13227 / J2315 / CF5610) (Burkholderia cepacia (strain J2315)).